The sequence spans 390 residues: Elongation factor Tu 1 (390 aa).

Positions 10 to 201 (KPHVNVGTIG…LDEYVAVPPR (192 aa)) constitute a tr-type G domain. A G1 region spans residues 19-26 (GHVDHGKT). 19 to 26 (GHVDHGKT) lines the GTP pocket. T26 lines the Mg(2+) pocket. The tract at residues 55-59 (GITIA) is G2. A G3 region spans residues 76–79 (DCPG). Residues 76–80 (DCPGH) and 131–134 (NKAD) each bind GTP. The G4 stretch occupies residues 131–134 (NKAD). A G5 region spans residues 168–170 (SAL).

Belongs to the TRAFAC class translation factor GTPase superfamily. Classic translation factor GTPase family. EF-Tu/EF-1A subfamily. Monomer.

It is found in the cytoplasm. The catalysed reaction is GTP + H2O = GDP + phosphate + H(+). Functionally, GTP hydrolase that promotes the GTP-dependent binding of aminoacyl-tRNA to the A-site of ribosomes during protein biosynthesis. This chain is Elongation factor Tu 1, found in Wolbachia pipientis wMel.